Reading from the N-terminus, the 196-residue chain is Putative NADH dehydrogenase/NAD(P)H nitroreductase Pnuc_0932 (196 aa).

This sequence belongs to the nitroreductase family. HadB/RutE subfamily. The cofactor is FMN.

In Polynucleobacter asymbioticus (strain DSM 18221 / CIP 109841 / QLW-P1DMWA-1) (Polynucleobacter necessarius subsp. asymbioticus), this protein is Putative NADH dehydrogenase/NAD(P)H nitroreductase Pnuc_0932.